Here is a 334-residue protein sequence, read N- to C-terminus: Cytoskeleton protein RodZ (334 aa).

The Cytoplasmic segment spans residues 1 to 111; that stretch reads MNTEATHDQN…LGKRRKKRDG (111 aa). The region spanning 19–71 is the HTH cro/C1-type domain; that stretch reads LRNAREQLGLSQQAVAERLCLKVSTVRDIEEDKAPSDLASTFLRGYIRSYARL. Positions 30–49 form a DNA-binding region, H-T-H motif; sequence QQAVAERLCLKVSTVRDIEE. A helical; Signal-anchor for type II membrane protein membrane pass occupies residues 112-132; it reads WLMSFTWLVLFVVVGLTGAWW. The Periplasmic segment spans residues 133 to 334; the sequence is WQNHKAQQEE…TLNAEPTPAQ (202 aa). The segment at 154–241 is disordered; the sequence is LNADKDSGQS…PSALPTSQAG (88 aa). Composition is skewed to low complexity over residues 176–211 and 219–241; these read TTPA…TVVA and TAAT…SQAG.

The protein belongs to the RodZ family.

The protein localises to the cell inner membrane. Its function is as follows. Cytoskeletal protein that is involved in cell-shape control through regulation of the length of the long axis. In Salmonella choleraesuis (strain SC-B67), this protein is Cytoskeleton protein RodZ.